An 88-amino-acid chain; its full sequence is Sec-independent protein translocase protein TatA (88 aa).

Residues 4–24 form a helical membrane-spanning segment; that stretch reads LSIWHWLIVLAVVLVLFVGGG. A disordered region spans residues 45 to 88; the sequence is ADDETMEGSTGSGGHIAPPGPAAGTVQRDASFSGTGRPSGSSTP. Residues 75 to 88 are compositionally biased toward low complexity; the sequence is SFSGTGRPSGSSTP.

This sequence belongs to the TatA/E family. The Tat system comprises two distinct complexes: a TatABC complex, containing multiple copies of TatA, TatB and TatC subunits, and a separate TatA complex, containing only TatA subunits. Substrates initially bind to the TatABC complex, which probably triggers association of the separate TatA complex to form the active translocon.

The protein resides in the cell inner membrane. Its function is as follows. Part of the twin-arginine translocation (Tat) system that transports large folded proteins containing a characteristic twin-arginine motif in their signal peptide across membranes. TatA could form the protein-conducting channel of the Tat system. This Gluconacetobacter diazotrophicus (strain ATCC 49037 / DSM 5601 / CCUG 37298 / CIP 103539 / LMG 7603 / PAl5) protein is Sec-independent protein translocase protein TatA.